A 500-amino-acid polypeptide reads, in one-letter code: Protein gar2 (500 aa).

2 stretches are compositionally biased toward basic and acidic residues: residues 1-41 (MAKK…KEIA) and 59-68 (KRASSPEPSK). The segment at 1-262 (MAKKDKTSVK…TKPSQDSNET (262 aa)) is disordered. Residues 69 to 78 (KSVKKQKKSK) show a composition bias toward basic residues. Over residues 90–120 (ESSSSESESSSSESESSSSESESSSSESSSS) the composition is skewed to low complexity. The segment covering 126–137 (VIVKTEEKKESS) has biased composition (basic and acidic residues). Phosphoserine is present on residues serine 143, serine 144, and serine 146. The span at 152–163 (AVVKIEEKKESS) shows a compositional bias: basic and acidic residues. The span at 164-182 (SDSSSESSSSESESESSSS) shows a compositional bias: low complexity. Residues 191–201 (VEKTEEKKEGS) are compositionally biased toward basic and acidic residues. Residues 202 to 218 (SESSSDSESSSDSSSES) are compositionally biased toward low complexity. The segment covering 219–233 (GDSDSSSDSESESSS) has biased composition (acidic residues). Residues 234–250 (EDEKKRKAEPASEERPA) are compositionally biased toward basic and acidic residues. RRM domains follow at residues 263–341 (CTVF…LSNP) and 366–443 (DTVF…FSTP). Residues 441 to 500 (STPRTGGGSRGGRGGFGGRGGFGGRGGFGGGRGRGRGGARSGNPNRGSVAPFSGNKVTFD) are disordered. A compositionally biased stretch (gly residues) spans 445–480 (TGGGSRGGRGGFGGRGGFGGRGGFGGGRGRGRGGAR).

Belongs to the RRM GAR family.

It localises to the nucleus. The protein resides in the nucleolus. Functionally, helps the assembly of pre-ribosomal particles containing 18S rRNA. This Schizosaccharomyces pombe (strain 972 / ATCC 24843) (Fission yeast) protein is Protein gar2 (gar2).